The chain runs to 51 residues: Probable antitoxin PhoAT (51 aa).

Belongs to the PhoAT antitoxin family. Interacts with toxin PhoH2.

Functionally, antitoxin component of a type II toxin-antitoxin (TA) system. The cognate antitoxin is PhoAT; the toxin gene cannot be expressed in the absence of the antitoxin gene in M.smegmatis (strain mc(2)4517), and abrogates the toxic effects of PhoH2 in M.smegmatis strain mc(2)155. In Mycobacterium tuberculosis (strain ATCC 25618 / H37Rv), this protein is Probable antitoxin PhoAT.